Consider the following 387-residue polypeptide: 3-ketoacyl-CoA thiolase (387 aa).

The active-site Acyl-thioester intermediate is C91. Residues H343 and C373 each act as proton acceptor in the active site.

The protein belongs to the thiolase-like superfamily. Thiolase family. Heterotetramer of two alpha chains (FadB) and two beta chains (FadA).

The protein resides in the cytoplasm. The enzyme catalyses an acyl-CoA + acetyl-CoA = a 3-oxoacyl-CoA + CoA. Its pathway is lipid metabolism; fatty acid beta-oxidation. Its function is as follows. Catalyzes the final step of fatty acid oxidation in which acetyl-CoA is released and the CoA ester of a fatty acid two carbons shorter is formed. In Shewanella frigidimarina (strain NCIMB 400), this protein is 3-ketoacyl-CoA thiolase.